The sequence spans 96 residues: Accessory cholera enterotoxin (96 aa).

Residues 76-96 form a helical membrane-spanning segment; that stretch reads QALAIVLQALMTRFALRALNL.

It is found in the secreted. The protein resides in the host cell membrane. Increases short-circuit current in rabbit ileal tissue mounted in Ussing chambers, by increasing the potential difference. Cultures of V.cholerae containing the cloned ace gene cause fluid secretion in ligated rabbit ileal loops. This chain is Accessory cholera enterotoxin (ace), found in Vibrio cholerae serotype O1 (strain ATCC 39315 / El Tor Inaba N16961).